The following is a 162-amino-acid chain: Protein-export protein SecB (162 aa).

It belongs to the SecB family. In terms of assembly, homotetramer, a dimer of dimers. One homotetramer interacts with 1 SecA dimer.

The protein resides in the cytoplasm. Its function is as follows. One of the proteins required for the normal export of preproteins out of the cell cytoplasm. It is a molecular chaperone that binds to a subset of precursor proteins, maintaining them in a translocation-competent state. It also specifically binds to its receptor SecA. The chain is Protein-export protein SecB from Bradyrhizobium sp. (strain BTAi1 / ATCC BAA-1182).